The primary structure comprises 555 residues: Urocanate hydratase (555 aa).

Residues 51 to 52 (GG), glutamine 129, 175 to 177 (GMG), glutamate 195, arginine 200, 241 to 242 (NA), 262 to 266 (QTSAH), 272 to 273 (YL), and tyrosine 321 each bind NAD(+). Cysteine 409 is a catalytic residue. Glycine 491 contacts NAD(+).

Belongs to the urocanase family. NAD(+) is required as a cofactor.

It localises to the cytoplasm. It catalyses the reaction 4-imidazolone-5-propanoate = trans-urocanate + H2O. Its pathway is amino-acid degradation; L-histidine degradation into L-glutamate; N-formimidoyl-L-glutamate from L-histidine: step 2/3. Its function is as follows. Catalyzes the conversion of urocanate to 4-imidazolone-5-propionate. The sequence is that of Urocanate hydratase from Rhizorhabdus wittichii (strain DSM 6014 / CCUG 31198 / JCM 15750 / NBRC 105917 / EY 4224 / RW1) (Sphingomonas wittichii).